The primary structure comprises 196 residues: ATP-dependent Clp protease proteolytic subunit (196 aa).

Residue S101 is the Nucleophile of the active site. H126 is a catalytic residue.

The protein belongs to the peptidase S14 family. As to quaternary structure, component of the chloroplastic Clp protease core complex.

Its subcellular location is the plastid. The protein resides in the chloroplast stroma. It catalyses the reaction Hydrolysis of proteins to small peptides in the presence of ATP and magnesium. alpha-casein is the usual test substrate. In the absence of ATP, only oligopeptides shorter than five residues are hydrolyzed (such as succinyl-Leu-Tyr-|-NHMec, and Leu-Tyr-Leu-|-Tyr-Trp, in which cleavage of the -Tyr-|-Leu- and -Tyr-|-Trp bonds also occurs).. In terms of biological role, cleaves peptides in various proteins in a process that requires ATP hydrolysis. Has a chymotrypsin-like activity. Plays a major role in the degradation of misfolded proteins. This chain is ATP-dependent Clp protease proteolytic subunit, found in Morus indica (Mulberry).